The sequence spans 335 residues: 4-hydroxy-3-methylbut-2-enyl diphosphate reductase (335 aa).

Residue cysteine 21 participates in [4Fe-4S] cluster binding. Residues histidine 50 and histidine 86 each coordinate (2E)-4-hydroxy-3-methylbut-2-enyl diphosphate. The dimethylallyl diphosphate site is built by histidine 50 and histidine 86. Positions 50 and 86 each coordinate isopentenyl diphosphate. Cysteine 108 contacts [4Fe-4S] cluster. Histidine 136 serves as a coordination point for (2E)-4-hydroxy-3-methylbut-2-enyl diphosphate. Histidine 136 contributes to the dimethylallyl diphosphate binding site. Histidine 136 contributes to the isopentenyl diphosphate binding site. Glutamate 138 acts as the Proton donor in catalysis. Position 177 (threonine 177) interacts with (2E)-4-hydroxy-3-methylbut-2-enyl diphosphate. Residue cysteine 207 participates in [4Fe-4S] cluster binding. Serine 235, serine 236, asparagine 237, and serine 280 together coordinate (2E)-4-hydroxy-3-methylbut-2-enyl diphosphate. Serine 235, serine 236, asparagine 237, and serine 280 together coordinate dimethylallyl diphosphate. Residues serine 235, serine 236, asparagine 237, and serine 280 each coordinate isopentenyl diphosphate.

The protein belongs to the IspH family. [4Fe-4S] cluster is required as a cofactor.

It carries out the reaction isopentenyl diphosphate + 2 oxidized [2Fe-2S]-[ferredoxin] + H2O = (2E)-4-hydroxy-3-methylbut-2-enyl diphosphate + 2 reduced [2Fe-2S]-[ferredoxin] + 2 H(+). The catalysed reaction is dimethylallyl diphosphate + 2 oxidized [2Fe-2S]-[ferredoxin] + H2O = (2E)-4-hydroxy-3-methylbut-2-enyl diphosphate + 2 reduced [2Fe-2S]-[ferredoxin] + 2 H(+). It participates in isoprenoid biosynthesis; dimethylallyl diphosphate biosynthesis; dimethylallyl diphosphate from (2E)-4-hydroxy-3-methylbutenyl diphosphate: step 1/1. It functions in the pathway isoprenoid biosynthesis; isopentenyl diphosphate biosynthesis via DXP pathway; isopentenyl diphosphate from 1-deoxy-D-xylulose 5-phosphate: step 6/6. In terms of biological role, catalyzes the conversion of 1-hydroxy-2-methyl-2-(E)-butenyl 4-diphosphate (HMBPP) into a mixture of isopentenyl diphosphate (IPP) and dimethylallyl diphosphate (DMAPP). Acts in the terminal step of the DOXP/MEP pathway for isoprenoid precursor biosynthesis. This chain is 4-hydroxy-3-methylbut-2-enyl diphosphate reductase, found in Rhizobium rhizogenes (strain K84 / ATCC BAA-868) (Agrobacterium radiobacter).